Here is a 318-residue protein sequence, read N- to C-terminus: MTRRCSHCSHNGHNSRTCPNRGVKIFGVRLTDGSIRKSASMGNLSLLSSAAGSTSGGASPADGPDAAPTAADGYASDDFVQGSSSATRDRKKGVPWTEEEHRRFLLGLQKLGKGDWRGISRNFVVSRTPTQVASHAQKYFIRQSNMTRRKRRSSLFDMVPDESMDLPPLPGGQEPETQVLNQPALPPPREEEEVDSMESDTSAVAESSSASAIMPDNLQSTYPVIVPAYFSPFLQFSVPFWQNQKDEDGPVQETHEIVKPVPVHSKSPINVDELVGMSKLSIGESNQETVSTSLSLNLVGGQNRQSAFHANPPTRAQA.

Disordered regions lie at residues 1–20 and 50–98; these read MTRR…TCPN and AAGS…PWTE. The segment at 3–20 adopts a CCHC-type zinc-finger fold; that stretch reads RRCSHCSHNGHNSRTCPN. Positions 8-18 are enriched in polar residues; the sequence is CSHNGHNSRTC. The segment covering 50–77 has biased composition (low complexity); that stretch reads AAGSTSGGASPADGPDAAPTAADGYASD. The HTH myb-type domain occupies 88 to 144; sequence RDRKKGVPWTEEEHRRFLLGLQKLGKGDWRGISRNFVVSRTPTQVASHAQKYFIRQS. Positions 116–140 form a DNA-binding region, H-T-H motif; that stretch reads WRGISRNFVVSRTPTQVASHAQKYF. The segment at 159–200 is disordered; it reads VPDESMDLPPLPGGQEPETQVLNQPALPPPREEEEVDSMESD.

As to expression, expressed in all tissues, with the highest level in senescent leaves.

It is found in the nucleus. Its function is as follows. Transcription repressor that binds to 5'-TATCCA-3' elements in gene promoters. Contributes to the sugar-repressed transcription of promoters containing SRS or 5'-TATCCA-3' elements. Transcription repressor involved in a cold stress response pathway that confers cold tolerance. Suppresses the DREB1-dependent signaling pathway under prolonged cold stress. DREB1 responds quickly and transiently while MYBS3 responds slowly to cold stress. They may act sequentially and complementarily for adaptation to short- and long-term cold stress. The protein is Transcription factor MYBS3 of Oryza sativa subsp. japonica (Rice).